A 158-amino-acid chain; its full sequence is Large ribosomal subunit protein uL16 (158 aa).

This sequence belongs to the universal ribosomal protein uL16 family. In terms of assembly, part of the 50S ribosomal subunit.

Binds 23S rRNA and is also seen to make contacts with the A and possibly P site tRNAs. The chain is Large ribosomal subunit protein uL16 from Parasynechococcus marenigrum (strain WH8102).